Reading from the N-terminus, the 955-residue chain is Valine--tRNA ligase (955 aa).

The 'HIGH' region signature appears at 41-51 (PNITGSLHMGH). A 'KMSKS' region motif is present at residues 554-558 (KMSKS). K557 provides a ligand contact to ATP. Residues 926-946 (QEKNKLLKLNEINLKLSEQIK) adopt a coiled-coil conformation.

It belongs to the class-I aminoacyl-tRNA synthetase family. ValS type 1 subfamily. As to quaternary structure, monomer.

It localises to the cytoplasm. The enzyme catalyses tRNA(Val) + L-valine + ATP = L-valyl-tRNA(Val) + AMP + diphosphate. In terms of biological role, catalyzes the attachment of valine to tRNA(Val). As ValRS can inadvertently accommodate and process structurally similar amino acids such as threonine, to avoid such errors, it has a 'posttransfer' editing activity that hydrolyzes mischarged Thr-tRNA(Val) in a tRNA-dependent manner. The chain is Valine--tRNA ligase from Buchnera aphidicola subsp. Acyrthosiphon pisum (strain APS) (Acyrthosiphon pisum symbiotic bacterium).